The chain runs to 352 residues: MFEKRTWIRLPRNVVVGHGVLGQTIEAVSELHLTGRPLVVSSPTPHDVAGKQVVAQFEDEGYDPSEIVIEEASFDAVQQVIDHASDIDAGFLLGVGGGKAIDITKMAADDLGLGFVSVPTAASHDGIVSGRGSVPEGDTRHSVAAEPPLAVIADTEVLAEAPWRLTTAGCADIISNYTAVRDWQLAHRLKNVHYSEYAGALSQMTAEMLVESADSIKQGLEESSWIVVKALVSSGVAMSIADSSRPASGAEHLFSHQLDRLVPDGALHGHQVGVGSIMTEYLHSGQKGKWRDARDALAAIGAPTTADELGIDDETVIEALTTAHQIRDRYTVLGDGMSEEAAIEAATVTGVI.

NAD(+) contacts are provided by residues 98–102 (GKAID) and 120–123 (TAAS). Aspartate 125 is a binding site for substrate. Serine 129 contacts NAD(+). Aspartate 172 is a binding site for substrate. Aspartate 172 and histidine 252 together coordinate Zn(2+). Histidine 256 contributes to the substrate binding site. A Zn(2+)-binding site is contributed by histidine 268.

The protein belongs to the glycerol-1-phosphate dehydrogenase family. The cofactor is Zn(2+).

It is found in the cytoplasm. The enzyme catalyses sn-glycerol 1-phosphate + NAD(+) = dihydroxyacetone phosphate + NADH + H(+). The catalysed reaction is sn-glycerol 1-phosphate + NADP(+) = dihydroxyacetone phosphate + NADPH + H(+). Its pathway is membrane lipid metabolism; glycerophospholipid metabolism. Catalyzes the NAD(P)H-dependent reduction of dihydroxyacetonephosphate (DHAP or glycerone phosphate) to glycerol 1-phosphate (G1P). The G1P thus generated is used as the glycerophosphate backbone of phospholipids in the cellular membranes of Archaea. In Haloarcula marismortui (strain ATCC 43049 / DSM 3752 / JCM 8966 / VKM B-1809) (Halobacterium marismortui), this protein is Glycerol-1-phosphate dehydrogenase [NAD(P)+].